The primary structure comprises 670 residues: Zinc finger protein 233 (670 aa).

A KRAB domain is found at 8–79; it reads VTFKDVAVVF…ETEIQGDGCS (72 aa). The C2H2-type 1; degenerate zinc finger occupies 258 to 280; it reads QTSDENGKGLSVGSNLELHQQLH. The segment at 311-336 adopts a C2H2-type 2; degenerate zinc-finger fold; that stretch reads EKCYRNGDSGEGFSQGSHLQPHQRVS. The segment at 342–364 adopts a C2H2-type 3; degenerate zinc-finger fold; it reads YRCQVYARSSNQNSCLPSHELTH. The C2H2-type 4; degenerate zinc finger occupies 370-392; that stretch reads CTCGRCGKGFHHSLDFDIHCVDS. The C2H2-type 5; degenerate zinc-finger motif lies at 398 to 420; it reads CKCDVYDKGFSQTSQLQAHQRGH. 7 C2H2-type zinc fingers span residues 452–474, 480–502, 508–530, 536–558, 564–586, 592–614, and 620–642; these read YKCEVCDKGFSKASNLQAHQRIH, YKCDVCDKNFSRNSHLQAHQRVH, YKCDTCGKDFSQISHLQAHQRVH, YKCETCGKGFSQSSHLQDHQQVH, YKCDVCGKGFSWSSHLQAHQRVH, YKCEECRKGFIWNSYLHVHQRIH, and YKCGMCGKSFSQTSHLQAHQRVH.

This sequence belongs to the krueppel C2H2-type zinc-finger protein family.

The protein resides in the nucleus. Functionally, may be involved in transcriptional regulation. This Homo sapiens (Human) protein is Zinc finger protein 233 (ZNF233).